Here is a 159-residue protein sequence, read N- to C-terminus: Neuroglobin-1 (159 aa).

The Globin domain occupies 3–151; sequence KLTEKEKELI…VVAAMSRGWA (149 aa). Residues His66 and His98 each coordinate heme b.

Belongs to the globin family. Monomer. Homodimers and homotetramers. Mainly monomeric but also detected as part of homodimers and homotetramers.

The protein resides in the cytoplasm. Its subcellular location is the cytosol. It localises to the mitochondrion matrix. It carries out the reaction Fe(III)-heme b-[protein] + nitric oxide + H2O = Fe(II)-heme b-[protein] + nitrite + 2 H(+). In terms of biological role, monomeric globin with a bis-histidyl six-coordinate heme-iron atom through which it can bind dioxygen, carbon monoxide and nitric oxide. Could help transport oxygen and increase its availability to the metabolically active neuronal tissues, though its low quantity in tissues as well as its high affinity for dioxygen, which may limit its oxygen-releasing ability, argue against it. The ferrous/deoxygenated form exhibits a nitrite reductase activity and it could produce nitric oxide which in turn inhibits cellular respiration in response to hypoxia. In its ferrous/deoxygenated state, it may also exhibit GDI (Guanine nucleotide Dissociation Inhibitor) activity toward heterotrimeric G-alpha proteins, thereby regulating signal transduction to facilitate neuroprotective responses in the wake of hypoxia and associated oxidative stress. This is Neuroglobin-1 (ngb1) from Oncorhynchus mykiss (Rainbow trout).